The chain runs to 2215 residues: Unconventional myosin-VIIa (2215 aa).

The region spanning 65–741 (HGVEDMIRLG…HDMLLEVERD (677 aa)) is the Myosin motor domain. 158 to 165 (GESGAGKT) contributes to the ATP binding site. The interval 632-639 (FVRCIKPN) is actin-binding. 5 IQ domains span residues 745 to 765 (TDRVILLQKVIRGFKDRSNFL), 768 to 788 (KSAATLIQRHWRGHHCRKNYE), 791 to 811 (RLGFLRLQALHRSRKLHKQYR), 814 to 834 (RQRIIEFQARCRAYLVRKAFR), and 837 to 857 (LWAVITVQAYARGMIARRLHR). An SAH region spans residues 858 to 935 (RLRVEYQRRL…LEQMEKARHE (78 aa)). The region spanning 1017 to 1253 (YTRRPLKQPL…PSWLELQATK (237 aa)) is the MyTH4 1 domain. An FERM 1 domain is found at 1258–1602 (IMLPVTFMDG…LVVTFLEGLR (345 aa)). Phosphothreonine is present on Thr-1563. Residue Ser-1569 is modified to Phosphoserine. Phosphothreonine is present on Thr-1571. The SH3 domain maps to 1603-1672 (KRSKYVVALQ…PTDCVYVMPT (70 aa)). The MyTH4 2 domain maps to 1747 to 1896 (HTREPLKQAL…PHLVEVEAIQ (150 aa)). The 304-residue stretch at 1902–2205 (IFHKVYFPDD…SYISQMLTAM (304 aa)) folds into the FERM 2 domain.

The protein belongs to the TRAFAC class myosin-kinesin ATPase superfamily. Myosin family. As to quaternary structure, might homodimerize in a two headed molecule through the formation of a coiled-coil rod. Identified in a complex with USH1C and USH1G. Interacts with MYRIP. Interacts with RPE65. Interacts with CIB2. May interact with CALM. Interacts with WHRN. Interacts with PLEKHB1 (via PH domain). Interacts with PCDH15. Interacts with TWF2. Interacts with USH1G. Interacts with MYH9. Interacts (via MyTH4-FERM domains) with cytoplasmic regions of ADGRV1 and USH2A. Interacts with PDZD7 (via MyTH4-FERM domains). Interacts with CALML4. As to expression, detected in mechanosensory stereocilia of cochlea hair cells (at protein level). Expressed in the retina, cochlea, kidney and liver.

Its subcellular location is the cytoplasm. The protein localises to the cell cortex. The protein resides in the cytoskeleton. It localises to the synapse. In terms of biological role, myosins are actin-based motor molecules with ATPase activity. Unconventional myosins serve in intracellular movements. Their highly divergent tails bind to membranous compartments, which are then moved relative to actin filaments. In the retina, plays an important role in the renewal of the outer photoreceptor disks. Plays an important role in the distribution and migration of retinal pigment epithelial (RPE) melanosomes and phagosomes, and in the regulation of opsin transport in retinal photoreceptors. Mediates intracellular transport of RPE65 in the retina pigment epithelium. In the inner ear, plays an important role in differentiation, morphogenesis and organization of cochlear hair cell bundles. Motor protein that is a part of the functional network formed by USH1C, USH1G, CDH23 and MYO7A that mediates mechanotransduction in cochlear hair cells. Required for normal hearing. Involved in hair-cell vesicle trafficking of aminoglycosides, which are known to induce ototoxicity. The chain is Unconventional myosin-VIIa (Myo7a) from Mus musculus (Mouse).